The sequence spans 541 residues: Valine N-monooxygenase 2 (541 aa).

Residues 1-18 (MAMNVSTTATTTASFAST) lie on the Cytoplasmic side of the membrane. The helical transmembrane segment at 19–41 (SSMNNTAKILLITLFISIVSTVI) threads the bilayer. The Lumenal segment spans residues 42–541 (KLQKRASYKK…LAPHLYPTSP (500 aa)). N-linked (GlcNAc...) asparagine glycosylation occurs at Asn277. A heme-binding site is contributed by Cys477. Residue Asn505 is glycosylated (N-linked (GlcNAc...) asparagine).

This sequence belongs to the cytochrome P450 family. Heme is required as a cofactor. Expressed in the epidermis, the next two cortex cell layers, the endodermis and the pericycle of leaf petioles. Strong expression around the laticifers among the phloem cells and in parenchymatic cells between the protoxylem and the metaxylem cells. In the leaves, preferentially expressed in the mesophyll cells adjacent to the epidermis.

It is found in the microsome membrane. It carries out the reaction L-valine + 2 reduced [NADPH--hemoprotein reductase] + 2 O2 = (E)-2-methylpropanal oxime + 2 oxidized [NADPH--hemoprotein reductase] + CO2 + 3 H2O + 2 H(+). It catalyses the reaction L-valine + reduced [NADPH--hemoprotein reductase] + O2 = N-hydroxy-L-valine + oxidized [NADPH--hemoprotein reductase] + H2O + 2 H(+). The enzyme catalyses N-hydroxy-L-valine + reduced [NADPH--hemoprotein reductase] + O2 = N,N-dihydroxy-L-valine + oxidized [NADPH--hemoprotein reductase] + H2O + H(+). The catalysed reaction is L-isoleucine + 2 reduced [NADPH--hemoprotein reductase] + 2 O2 = (1E,2S)-2-methylbutanal oxime + 2 oxidized [NADPH--hemoprotein reductase] + CO2 + 3 H2O + 2 H(+). It carries out the reaction L-isoleucine + reduced [NADPH--hemoprotein reductase] + O2 = N-hydroxy-L-isoleucine + oxidized [NADPH--hemoprotein reductase] + H2O + 2 H(+). It catalyses the reaction N-hydroxy-L-isoleucine + reduced [NADPH--hemoprotein reductase] + O2 = N,N-dihydroxy-L-isoleucine + oxidized [NADPH--hemoprotein reductase] + H2O + H(+). Its function is as follows. Involved in the biosynthesis of the cyanogenic glucosides linamarin and lotaustralin. Can use L-valine or L-isoleucine as substrate. Catalyzes multi-step reactions starting with two successive N-hydroxylations using L-valine and L-isoleucine as substrates leading to the formation of N,N-dihydroxy-L-valine and N,N-dihydroxy-L-isoleucine, respectively; following spontaneous reactions lead to the production of (E)-2-methylpropanal oxime and (1E,2S)-2-methylbutanal oxime, respectively. The chain is Valine N-monooxygenase 2 from Manihot esculenta (Cassava).